A 56-amino-acid polypeptide reads, in one-letter code: Large ribosomal subunit protein bL32 (56 aa).

Positions 1 to 34 (MAVQQNKPSRSKRGMRRAHDALKTSTISVDKTSG) are disordered.

The protein belongs to the bacterial ribosomal protein bL32 family.

In Baumannia cicadellinicola subsp. Homalodisca coagulata, this protein is Large ribosomal subunit protein bL32.